We begin with the raw amino-acid sequence, 231 residues long: Aldehyde decarbonylase (231 aa).

Residues Glu-32, Glu-60, His-63, Glu-115, and His-147 each contribute to the Fe cation site.

The protein belongs to the aldehyde decarbonylase family. It depends on Binds 2 metal cations per subunit. The catalytic dinuclear metal-binding site could be either a di-iron or a manganese-iron cofactor. as a cofactor.

It carries out the reaction a long-chain fatty aldehyde + 2 NADPH + O2 + H(+) = a long-chain alkane + formate + 2 NADP(+) + H2O. Functionally, catalyzes the decarbonylation of fatty aldehydes to alkanes. Requires the presence of ferredoxin, ferredoxin reductase and NADPH for in vitro decarbonylase activity. Involved in the biosynthesis of alkanes, mainly heptadecane and pentadecane. The polypeptide is Aldehyde decarbonylase (Synechococcus elongatus (strain ATCC 33912 / PCC 7942 / FACHB-805) (Anacystis nidulans R2)).